The following is a 343-amino-acid chain: Mitochondrial import inner membrane translocase subunit TIM50-A (343 aa).

At Met-1–Asn-57 the chain is on the mitochondrial matrix side. The helical transmembrane segment at Phe-58 to Tyr-77 threads the bilayer. At Lys-78–Lys-343 the chain is on the mitochondrial intermembrane side. The 144-residue stretch at Tyr-135–Ile-278 folds into the FCP1 homology domain.

Belongs to the TIM50 family. As to quaternary structure, component of the TIM23 complex at least composed of Tim23, Tim17 (Tim17a1, Tim17a2 or Tim17b1) and a Tim50. In terms of tissue distribution, exclusively expressed in the testis.

The protein resides in the mitochondrion inner membrane. Essential component of the TIM23 complex, a complex that mediates the translocation of transit peptide-containing proteins across the mitochondrial inner membrane. The polypeptide is Mitochondrial import inner membrane translocase subunit TIM50-A (ttm3) (Drosophila melanogaster (Fruit fly)).